The sequence spans 167 residues: Leptin (167 aa).

An N-terminal signal peptide occupies residues 1–21 (MLCGPLCRFLWLWPYLSYVEA). Residues Cys117 and Cys167 are joined by a disulfide bond.

Belongs to the leptin family.

It is found in the secreted. Functionally, key player in the regulation of energy balance and body weight control. Once released into the circulation, has central and peripheral effects by binding LEPR, found in many tissues, which results in the activation of several major signaling pathways. In the hypothalamus, acts as an appetite-regulating factor that induces a decrease in food intake and an increase in energy consumption by inducing anorexinogenic factors and suppressing orexigenic neuropeptides, also regulates bone mass and secretion of hypothalamo-pituitary-adrenal hormones. In the periphery, increases basal metabolism, influences reproductive function, regulates pancreatic beta-cell function and insulin secretion, is pro-angiogenic for endothelial cell and affects innate and adaptive immunity. In the arcuate nucleus of the hypothalamus, activates by depolarization POMC neurons inducing FOS and SOCS3 expression to release anorexigenic peptides and inhibits by hyperpolarization NPY neurons inducing SOCS3 with a consequent reduction on release of orexigenic peptides. In addition to its known satiety inducing effect, has a modulatory role in nutrient absorption. In the intestine, reduces glucose absorption by enterocytes by activating PKC and leading to a sequential activation of p38, PI3K and ERK signaling pathways which exerts an inhibitory effect on glucose absorption. Acts as a growth factor on certain tissues, through the activation of different signaling pathways increases expression of genes involved in cell cycle regulation such as CCND1, via JAK2-STAT3 pathway, or VEGFA, via MAPK1/3 and PI3K-AKT1 pathways. May also play an apoptotic role via JAK2-STAT3 pathway and up-regulation of BIRC5 expression. Pro-angiogenic, has mitogenic activity on vascular endothelial cells and plays a role in matrix remodeling by regulating the expression of matrix metalloproteinases (MMPs) and tissue inhibitors of metalloproteinases (TIMPs). In innate immunity, modulates the activity and function of neutrophils by increasing chemotaxis and the secretion of oxygen radicals. Increases phagocytosis by macrophages and enhances secretion of pro-inflammatory mediators. Increases cytotoxic ability of NK cells. Plays a pro-inflammatory role, in synergy with IL1B, by inducing NOS2 which promotes the production of IL6, IL8 and Prostaglandin E2, through a signaling pathway that involves JAK2, PI3K, MAP2K1/MEK1 and MAPK14/p38. In adaptive immunity, promotes the switch of memory T-cells towards T helper-1 cell immune responses. Increases CD4(+)CD25(-) T-cell proliferation and reduces autophagy during TCR (T-cell receptor) stimulation, through MTOR signaling pathway activation and BCL2 up-regulation. In Felis catus (Cat), this protein is Leptin (LEP).